Here is a 345-residue protein sequence, read N- to C-terminus: MSRELTLQERLDGEAGPDPLRQAVKKAVAALAQAAIDISDLTCRGALAGITGEAQGRNTDGDVQKDLDVRADQIIRDALGALPIAVLASEEMAELDILNPGAPISVAFDPLDGSSNINTNISVGTIFSIMPTPPDASAAFTQPGSAQLAAGFVVYGPQTSLILTLGQGVDIFTLDRVERVFKLTGSMMQIPADATEFAINTSNRRHWDLPVRAYIDECLMGADGPSGKNFNMRWIGSLVAEAFRILVRGGIFLYPGDARDGYEDGRLRLVYEAHPMAFIIEQAGGGASTGRKRILDIVPGSLHQRVPLIMGSIKNVRRLEDMHTGPNVALEANAPLFGHRGLFRV.

Residues glutamate 90, aspartate 109, leucine 111, and aspartate 112 each coordinate Mg(2+). Residues 112–115 (DGSS) and asparagine 200 each bind substrate. Glutamate 272 contacts Mg(2+).

This sequence belongs to the FBPase class 1 family. Homotetramer. The cofactor is Mg(2+).

Its subcellular location is the cytoplasm. It catalyses the reaction beta-D-fructose 1,6-bisphosphate + H2O = beta-D-fructose 6-phosphate + phosphate. It participates in carbohydrate biosynthesis; gluconeogenesis. This is Fructose-1,6-bisphosphatase class 1 1 from Nitrobacter hamburgensis (strain DSM 10229 / NCIMB 13809 / X14).